Reading from the N-terminus, the 543-residue chain is Protein MGF 505-10R (543 aa).

The protein belongs to the asfivirus MGF 505 family.

Plays a role in virus cell tropism, and may be required for efficient virus replication in macrophages. The sequence is that of Protein MGF 505-10R from Ornithodoros (relapsing fever ticks).